The chain runs to 378 residues: Chaperone protein DnaJ (378 aa).

In terms of domain architecture, J spans 5-69; it reads EYYDRLGVSK…QKRAAYDQYG (65 aa). The segment at 134 to 216 adopts a CR-type zinc-finger fold; it reads GVEKEVSYNR…CHGTGHEKQA (83 aa). 8 residues coordinate Zn(2+): C147, C150, C164, C167, C190, C193, C204, and C207. CXXCXGXG motif repeat units follow at residues 147-154, 164-171, 190-197, and 204-211; these read CGTCLGSG, CRKCHGSG, CDICHGSG, and CQTCHGTG.

It belongs to the DnaJ family. In terms of assembly, homodimer. It depends on Zn(2+) as a cofactor.

It localises to the cytoplasm. Functionally, participates actively in the response to hyperosmotic and heat shock by preventing the aggregation of stress-denatured proteins and by disaggregating proteins, also in an autonomous, DnaK-independent fashion. Unfolded proteins bind initially to DnaJ; upon interaction with the DnaJ-bound protein, DnaK hydrolyzes its bound ATP, resulting in the formation of a stable complex. GrpE releases ADP from DnaK; ATP binding to DnaK triggers the release of the substrate protein, thus completing the reaction cycle. Several rounds of ATP-dependent interactions between DnaJ, DnaK and GrpE are required for fully efficient folding. Also involved, together with DnaK and GrpE, in the DNA replication of plasmids through activation of initiation proteins. In Streptococcus pyogenes serotype M6 (strain ATCC BAA-946 / MGAS10394), this protein is Chaperone protein DnaJ.